Reading from the N-terminus, the 533-residue chain is D-3-phosphoglycerate dehydrogenase (533 aa).

Alanine 2 carries the N-acetylalanine modification. Position 14 is a phosphoserine (serine 14). Lysine 21 bears the N6-acetyllysine; alternate mark. A Glycyl lysine isopeptide (Lys-Gly) (interchain with G-Cter in SUMO1); alternate cross-link involves residue lysine 21. A Glycyl lysine isopeptide (Lys-Gly) (interchain with G-Cter in SUMO2); alternate cross-link involves residue lysine 21. An N6-acetyllysine modification is found at lysine 58. NAD(+) is bound by residues threonine 78, arginine 155–isoleucine 156, aspartate 175, threonine 207, cysteine 234–arginine 236, and aspartate 260. Threonine 78 carries the post-translational modification Phosphothreonine. The active site involves arginine 236. Glutamate 265 is an active-site residue. Histidine 283 acts as the Proton donor in catalysis. Histidine 283–alanine 286 provides a ligand contact to NAD(+).

It belongs to the D-isomer specific 2-hydroxyacid dehydrogenase family. In terms of assembly, homotetramer.

It catalyses the reaction (2R)-3-phosphoglycerate + NAD(+) = 3-phosphooxypyruvate + NADH + H(+). It carries out the reaction (R)-2-hydroxyglutarate + NAD(+) = 2-oxoglutarate + NADH + H(+). The enzyme catalyses (S)-malate + NAD(+) = oxaloacetate + NADH + H(+). The protein operates within amino-acid biosynthesis; L-serine biosynthesis; L-serine from 3-phospho-D-glycerate: step 1/3. Functionally, catalyzes the reversible oxidation of 3-phospho-D-glycerate to 3-phosphonooxypyruvate, the first step of the phosphorylated L-serine biosynthesis pathway. Also catalyzes the reversible oxidation of 2-hydroxyglutarate to 2-oxoglutarate and the reversible oxidation of (S)-malate to oxaloacetate. The chain is D-3-phosphoglycerate dehydrogenase (PHGDH) from Pongo abelii (Sumatran orangutan).